The sequence spans 819 residues: Protein EFR3 homolog A (819 aa).

The disordered stretch occupies residues 210-230; that stretch reads DTDSRTGPPASPTTGDKEENP.

Belongs to the EFR3 family. Component of a phosphatidylinositol 4-kinase (PI4K) complex. In terms of processing, palmitoylated at its N-terminus, anchoring the protein to the plasma membrane.

The protein resides in the cell membrane. In terms of biological role, component of a complex required to localize phosphatidylinositol 4-kinase (PI4K) to the plasma membrane. The complex acts as a regulator of phosphatidylinositol 4-phosphate (PtdIns(4)P) synthesis. In the complex, efr3a probably acts as the membrane-anchoring component. The chain is Protein EFR3 homolog A (efr3a) from Xenopus laevis (African clawed frog).